A 539-amino-acid chain; its full sequence is Putative dimethylaniline monooxygenase [N-oxide-forming] 6 (539 aa).

Residues 9-13 (GAGVS), Glu32, 40-41 (LW), and 61-62 (NS) contribute to the FAD site. 195-198 (SGSD) lines the NADP(+) pocket. Residues 518–538 (FYNLLKMLSFPLLLLAVTLTF) traverse the membrane as a helical segment.

It belongs to the FMO family. FAD serves as cofactor.

It is found in the microsome membrane. The protein resides in the endoplasmic reticulum membrane. It carries out the reaction N,N-dimethylaniline + NADPH + O2 + H(+) = N,N-dimethylaniline N-oxide + NADP(+) + H2O. Its function is as follows. It is probable that this protein is only produced in very small quantity or not at all as the gene coding for it seems to be unable to produce full-length transcripts. The chain is Putative dimethylaniline monooxygenase [N-oxide-forming] 6 (FMO6P) from Homo sapiens (Human).